Reading from the N-terminus, the 186-residue chain is NADH-quinone oxidoreductase subunit I (186 aa).

2 4Fe-4S ferredoxin-type domains span residues Leu70 to Ala100 and Asp113 to Asp142. Cys80, Cys83, Cys86, Cys90, Cys122, Cys125, Cys128, and Cys132 together coordinate [4Fe-4S] cluster.

Belongs to the complex I 23 kDa subunit family. As to quaternary structure, NDH-1 is composed of 14 different subunits. Subunits NuoA, H, J, K, L, M, N constitute the membrane sector of the complex. The cofactor is [4Fe-4S] cluster.

The protein resides in the cell inner membrane. The catalysed reaction is a quinone + NADH + 5 H(+)(in) = a quinol + NAD(+) + 4 H(+)(out). Functionally, NDH-1 shuttles electrons from NADH, via FMN and iron-sulfur (Fe-S) centers, to quinones in the respiratory chain. The immediate electron acceptor for the enzyme in this species is believed to be ubiquinone. Couples the redox reaction to proton translocation (for every two electrons transferred, four hydrogen ions are translocated across the cytoplasmic membrane), and thus conserves the redox energy in a proton gradient. This chain is NADH-quinone oxidoreductase subunit I, found in Pelobacter propionicus (strain DSM 2379 / NBRC 103807 / OttBd1).